A 226-amino-acid polypeptide reads, in one-letter code: Large ribosomal subunit protein uL1 (226 aa).

The protein belongs to the universal ribosomal protein uL1 family. As to quaternary structure, part of the 50S ribosomal subunit.

In terms of biological role, binds directly to 23S rRNA. The L1 stalk is quite mobile in the ribosome, and is involved in E site tRNA release. Functionally, protein L1 is also a translational repressor protein, it controls the translation of the L11 operon by binding to its mRNA. In Borreliella afzelii (strain PKo) (Borrelia afzelii), this protein is Large ribosomal subunit protein uL1.